Here is a 119-residue protein sequence, read N- to C-terminus: Ribonuclease P protein component (119 aa).

Belongs to the RnpA family. In terms of assembly, consists of a catalytic RNA component (M1 or rnpB) and a protein subunit.

It catalyses the reaction Endonucleolytic cleavage of RNA, removing 5'-extranucleotides from tRNA precursor.. Functionally, RNaseP catalyzes the removal of the 5'-leader sequence from pre-tRNA to produce the mature 5'-terminus. It can also cleave other RNA substrates such as 4.5S RNA. The protein component plays an auxiliary but essential role in vivo by binding to the 5'-leader sequence and broadening the substrate specificity of the ribozyme. The sequence is that of Ribonuclease P protein component from Klebsiella pneumoniae (strain 342).